The sequence spans 269 residues: Protein OPG079 (269 aa).

It belongs to the orthopoxvirus OPG079 family. As to quaternary structure, homoomultimer (Potential). Interacts with the small subunit of ribonucleotide reductase. Interacts with host FAM111A; this interaction protomtes OPG079 degradation through autophagy.

It is found in the host cytoplasm. Functionally, plays an essential role in viral DNA replication. Binds to ssDNA with high affinity and localizes to cytoplasmic factories where nascent viral genomes accumulate. May disrupt loops, hairpins and other secondary structures present on ssDNA to reduce and eliminate pausing of viral DNA polymerase at specific sites during elongation. The polypeptide is Protein OPG079 (OPG079) (Vaccinia virus (strain Copenhagen) (VACV)).